A 178-amino-acid polypeptide reads, in one-letter code: Crossover junction endodeoxyribonuclease RuvC (178 aa).

Active-site residues include Asp-18, Glu-78, and Asp-150. Asp-18, Glu-78, and Asp-150 together coordinate Mg(2+).

Belongs to the RuvC family. As to quaternary structure, homodimer which binds Holliday junction (HJ) DNA. The HJ becomes 2-fold symmetrical on binding to RuvC with unstacked arms; it has a different conformation from HJ DNA in complex with RuvA. In the full resolvosome a probable DNA-RuvA(4)-RuvB(12)-RuvC(2) complex forms which resolves the HJ. Requires Mg(2+) as cofactor.

The protein resides in the cytoplasm. The catalysed reaction is Endonucleolytic cleavage at a junction such as a reciprocal single-stranded crossover between two homologous DNA duplexes (Holliday junction).. Its function is as follows. The RuvA-RuvB-RuvC complex processes Holliday junction (HJ) DNA during genetic recombination and DNA repair. Endonuclease that resolves HJ intermediates. Cleaves cruciform DNA by making single-stranded nicks across the HJ at symmetrical positions within the homologous arms, yielding a 5'-phosphate and a 3'-hydroxyl group; requires a central core of homology in the junction. The consensus cleavage sequence is 5'-(A/T)TT(C/G)-3'. Cleavage occurs on the 3'-side of the TT dinucleotide at the point of strand exchange. HJ branch migration catalyzed by RuvA-RuvB allows RuvC to scan DNA until it finds its consensus sequence, where it cleaves and resolves the cruciform DNA. This is Crossover junction endodeoxyribonuclease RuvC from Granulibacter bethesdensis (strain ATCC BAA-1260 / CGDNIH1).